Consider the following 508-residue polypeptide: Photosystem II CP47 reaction center protein (508 aa).

The next 6 helical transmembrane spans lie at 21–36 (SVHI…WAGS), 101–115 (IVFS…IWHW), 140–156 (GIHL…FGAF), 203–218 (IAAG…FHLS), 237–252 (VLSS…AFVV), and 457–472 (SFAL…HGAR).

It belongs to the PsbB/PsbC family. PsbB subfamily. In terms of assembly, PSII is composed of 1 copy each of membrane proteins PsbA, PsbB, PsbC, PsbD, PsbE, PsbF, PsbH, PsbI, PsbJ, PsbK, PsbL, PsbM, PsbT, PsbX, PsbY, PsbZ, Psb30/Ycf12, at least 3 peripheral proteins of the oxygen-evolving complex and a large number of cofactors. It forms dimeric complexes. Binds multiple chlorophylls. PSII binds additional chlorophylls, carotenoids and specific lipids. is required as a cofactor.

Its subcellular location is the plastid. The protein resides in the chloroplast thylakoid membrane. One of the components of the core complex of photosystem II (PSII). It binds chlorophyll and helps catalyze the primary light-induced photochemical processes of PSII. PSII is a light-driven water:plastoquinone oxidoreductase, using light energy to abstract electrons from H(2)O, generating O(2) and a proton gradient subsequently used for ATP formation. The sequence is that of Photosystem II CP47 reaction center protein from Olimarabidopsis pumila (Dwarf rocket).